Here is a 74-residue protein sequence, read N- to C-terminus: Kappa-scoloptoxin(07)-Ssm2e (74 aa).

The first 19 residues, 1-19 (MLVFYALLFVSVFSNTVMG), serve as a signal peptide directing secretion. Residues 20–41 (ATIDMPIPKPILREAIEEIDVN) constitute a propeptide that is removed on maturation.

Belongs to the scoloptoxin-07 family. In terms of processing, contains 3 disulfide bonds. In terms of tissue distribution, expressed by the venom gland.

The protein localises to the secreted. Its function is as follows. Inhibits voltage-gated potassium channels. This is Kappa-scoloptoxin(07)-Ssm2e from Scolopendra mutilans (Chinese red-headed centipede).